A 362-amino-acid polypeptide reads, in one-letter code: Phospho-N-acetylmuramoyl-pentapeptide-transferase (362 aa).

10 helical membrane-spanning segments follow: residues 28-48 (AACMTALIVSFLLGPALIRWL), 72-92 (GTPTMGGVLILAATGISTLLW), 100-120 (VWAVLLLTLGYGGIGFADDYL), 134-154 (VKLIGQAVIGLIAAIWIMSLT), 170-190 (VLIPLGFAFPLFGMLVAMGAS), 201-221 (GLAIVPTIIAAGVFALIAYLV), 241-261 (LTVFCSALIGAGLGFLWFNAP), 265-285 (VFMGDTGSLALGGALGGVAIA), 290-310 (IVLAIVGGLFVVETISVIVQV), and 339-359 (TIVIRFWIVSFILALAGLATL).

Belongs to the glycosyltransferase 4 family. MraY subfamily. The cofactor is Mg(2+).

The protein resides in the cell inner membrane. The catalysed reaction is UDP-N-acetyl-alpha-D-muramoyl-L-alanyl-gamma-D-glutamyl-meso-2,6-diaminopimeloyl-D-alanyl-D-alanine + di-trans,octa-cis-undecaprenyl phosphate = di-trans,octa-cis-undecaprenyl diphospho-N-acetyl-alpha-D-muramoyl-L-alanyl-D-glutamyl-meso-2,6-diaminopimeloyl-D-alanyl-D-alanine + UMP. The protein operates within cell wall biogenesis; peptidoglycan biosynthesis. In terms of biological role, catalyzes the initial step of the lipid cycle reactions in the biosynthesis of the cell wall peptidoglycan: transfers peptidoglycan precursor phospho-MurNAc-pentapeptide from UDP-MurNAc-pentapeptide onto the lipid carrier undecaprenyl phosphate, yielding undecaprenyl-pyrophosphoryl-MurNAc-pentapeptide, known as lipid I. The polypeptide is Phospho-N-acetylmuramoyl-pentapeptide-transferase (Granulibacter bethesdensis (strain ATCC BAA-1260 / CGDNIH1)).